Consider the following 724-residue polypeptide: Peroxidase mlt-7 (724 aa).

Positions 1–24 are cleaved as a signal peptide; it reads MRRLHRNLSLLFLICILNEYRIES. N-linked (GlcNAc...) asparagine glycosylation is present at asparagine 7. The propeptide occupies 25-178; it reads QTLSPPITDR…GCVPQLSDVG (154 aa). The ShKT domain occupies 42–76; that stretch reads CCDHHEWCRFWASIGECNANKDWMTENCQLACGTC. Residues cysteine 181 and cysteine 198 are joined by a disulfide bond. A glycan (N-linked (GlcNAc...) asparagine) is linked at asparagine 233. The active-site Proton acceptor is the histidine 271. Aspartate 272 contacts Ca(2+). The cysteines at positions 284 and 294 are disulfide-linked. Threonine 335, tyrosine 337, aspartate 339, and serine 341 together coordinate Ca(2+). Histidine 493 contacts heme b. N-linked (GlcNAc...) asparagine glycosylation is found at asparagine 509 and asparagine 617. Cystine bridges form between cysteine 588-cysteine 645 and cysteine 686-cysteine 710.

It belongs to the peroxidase family. Heme b is required as a cofactor. Expressed in the hypodermal cells, specifically the head and seam/body.

The catalysed reaction is 2 a phenolic donor + H2O2 = 2 a phenolic radical donor + 2 H2O. Its function is as follows. Plays an essential role in cuticle biogenesis. Required in combination with bli-3 for correct formation of cross-links in cuticle collagens. The chain is Peroxidase mlt-7 from Caenorhabditis elegans.